Reading from the N-terminus, the 337-residue chain is Holliday junction branch migration complex subunit RuvB (337 aa).

Residues 4–184 (QDRIISAELK…FGIVQRLEFY (181 aa)) form a large ATPase domain (RuvB-L) region. ATP contacts are provided by residues isoleucine 23, arginine 24, glycine 65, lysine 68, threonine 69, threonine 70, 131–133 (EDY), arginine 174, tyrosine 184, and arginine 221. Threonine 69 contributes to the Mg(2+) binding site. The interval 185-255 (DVESLTTIVA…VAQRALDMLS (71 aa)) is small ATPAse domain (RuvB-S). The segment at 258–337 (SQGFDHLDRR…FNYQLPSDFK (80 aa)) is head domain (RuvB-H). 2 residues coordinate DNA: arginine 313 and arginine 318.

The protein belongs to the RuvB family. In terms of assembly, homohexamer. Forms an RuvA(8)-RuvB(12)-Holliday junction (HJ) complex. HJ DNA is sandwiched between 2 RuvA tetramers; dsDNA enters through RuvA and exits via RuvB. An RuvB hexamer assembles on each DNA strand where it exits the tetramer. Each RuvB hexamer is contacted by two RuvA subunits (via domain III) on 2 adjacent RuvB subunits; this complex drives branch migration. In the full resolvosome a probable DNA-RuvA(4)-RuvB(12)-RuvC(2) complex forms which resolves the HJ.

The protein resides in the cytoplasm. The catalysed reaction is ATP + H2O = ADP + phosphate + H(+). Functionally, the RuvA-RuvB-RuvC complex processes Holliday junction (HJ) DNA during genetic recombination and DNA repair, while the RuvA-RuvB complex plays an important role in the rescue of blocked DNA replication forks via replication fork reversal (RFR). RuvA specifically binds to HJ cruciform DNA, conferring on it an open structure. The RuvB hexamer acts as an ATP-dependent pump, pulling dsDNA into and through the RuvAB complex. RuvB forms 2 homohexamers on either side of HJ DNA bound by 1 or 2 RuvA tetramers; 4 subunits per hexamer contact DNA at a time. Coordinated motions by a converter formed by DNA-disengaged RuvB subunits stimulates ATP hydrolysis and nucleotide exchange. Immobilization of the converter enables RuvB to convert the ATP-contained energy into a lever motion, pulling 2 nucleotides of DNA out of the RuvA tetramer per ATP hydrolyzed, thus driving DNA branch migration. The RuvB motors rotate together with the DNA substrate, which together with the progressing nucleotide cycle form the mechanistic basis for DNA recombination by continuous HJ branch migration. Branch migration allows RuvC to scan DNA until it finds its consensus sequence, where it cleaves and resolves cruciform DNA. This is Holliday junction branch migration complex subunit RuvB from Marinomonas sp. (strain MWYL1).